A 194-amino-acid chain; its full sequence is Ribosome maturation factor RimP (194 aa).

The protein belongs to the RimP family.

It localises to the cytoplasm. Required for maturation of 30S ribosomal subunits. The sequence is that of Ribosome maturation factor RimP from Jannaschia sp. (strain CCS1).